The following is a 294-amino-acid chain: GTPase Era (294 aa).

The region spanning 4-170 is the Era-type G domain; that stretch reads KSGFVSVIGR…VEEIFTFLPE (167 aa). The segment at 12 to 19 is G1; that stretch reads GRPNVGKS. 12–19 provides a ligand contact to GTP; sequence GRPNVGKS. The G2 stretch occupies residues 38–42; it reads QTTRN. The segment at 59–62 is G3; it reads DTPG. Residues 59–63 and 121–124 contribute to the GTP site; these read DTPGI and NKID. Residues 121 to 124 are G4; it reads NKID. Residues 149 to 151 are G5; sequence ISA. The KH type-2 domain occupies 201–278; sequence TREEVPYGVA…YLDLWVKIEK (78 aa).

Belongs to the TRAFAC class TrmE-Era-EngA-EngB-Septin-like GTPase superfamily. Era GTPase family. Monomer.

It is found in the cytoplasm. It localises to the cell inner membrane. Functionally, an essential GTPase that binds both GDP and GTP, with rapid nucleotide exchange. Plays a role in 16S rRNA processing and 30S ribosomal subunit biogenesis and possibly also in cell cycle regulation and energy metabolism. The chain is GTPase Era from Halothermothrix orenii (strain H 168 / OCM 544 / DSM 9562).